The following is a 122-amino-acid chain: Large ribosomal subunit protein uL14c (122 aa).

Belongs to the universal ribosomal protein uL14 family. Part of the 50S ribosomal subunit.

The protein localises to the plastid. It localises to the chloroplast. In terms of biological role, binds to 23S rRNA. The chain is Large ribosomal subunit protein uL14c from Oenothera biennis (German evening primrose).